The chain runs to 234 residues: MEFSPPLQRATLIQRYKRFLADVITPDGRELTLHCPNTGAMTGCATPGDTVWYSTSDNTKRKYPHTWELTQSQSGAFICVNTLWANRLTKEAILNESISELSGYSSLKSEVKYGAERSRIDFMLQADSRPDCYIEVKSVTLAENEQGYFPDAVTERGQKHLRELMSVAAEGQRAVIFFAVLHSAITRFSPARHIDEKYAQLLSEAQQRGVEILAYKAELSAEGMALKKSLPVTL.

Residues 201 to 220 (LLSEAQQRGVEILAYKAELS) constitute a DNA-binding region (H-T-H motif).

The protein belongs to the SfsA family.

In terms of biological role, binds to DNA non-specifically. Could be a regulatory factor involved in maltose metabolism. This Escherichia coli (strain SMS-3-5 / SECEC) protein is Sugar fermentation stimulation protein A.